The chain runs to 242 residues: Large ribosomal subunit protein uL2 (242 aa).

A disordered region spans residues 201-242 (VDHPFGGGRHQHTGKPTTVSRKKVPPGRKVGHISARRTGVRK). Over residues 220–242 (SRKKVPPGRKVGHISARRTGVRK) the composition is skewed to basic residues.

This sequence belongs to the universal ribosomal protein uL2 family. In terms of assembly, part of the 50S ribosomal subunit. Forms a bridge to the 30S subunit in the 70S ribosome.

In terms of biological role, one of the primary rRNA binding proteins. Required for association of the 30S and 50S subunits to form the 70S ribosome, for tRNA binding and peptide bond formation. It has been suggested to have peptidyltransferase activity; this is somewhat controversial. Makes several contacts with the 16S rRNA in the 70S ribosome. This is Large ribosomal subunit protein uL2 from Methanocaldococcus jannaschii (strain ATCC 43067 / DSM 2661 / JAL-1 / JCM 10045 / NBRC 100440) (Methanococcus jannaschii).